A 518-amino-acid polypeptide reads, in one-letter code: ATP synthase subunit alpha (518 aa).

ATP is bound at residue 170-177; the sequence is GDRQTGKT.

This sequence belongs to the ATPase alpha/beta chains family. F-type ATPases have 2 components, CF(1) - the catalytic core - and CF(0) - the membrane proton channel. CF(1) has five subunits: alpha(3), beta(3), gamma(1), delta(1), epsilon(1). CF(0) has three main subunits: a(1), b(2) and c(9-12). The alpha and beta chains form an alternating ring which encloses part of the gamma chain. CF(1) is attached to CF(0) by a central stalk formed by the gamma and epsilon chains, while a peripheral stalk is formed by the delta and b chains.

It localises to the cell membrane. It catalyses the reaction ATP + H2O + 4 H(+)(in) = ADP + phosphate + 5 H(+)(out). Produces ATP from ADP in the presence of a proton gradient across the membrane. The alpha chain is a regulatory subunit. The protein is ATP synthase subunit alpha of Mycoplasmoides gallisepticum (strain R(low / passage 15 / clone 2)) (Mycoplasma gallisepticum).